The primary structure comprises 97 residues: Putative membrane protein insertion efficiency factor (97 aa).

Residues 68–97 (VPGTELNTAPRSGQACNPTESTHSTTQTRH) are disordered. Positions 72 to 97 (ELNTAPRSGQACNPTESTHSTTQTRH) are enriched in polar residues.

This sequence belongs to the UPF0161 family.

The protein localises to the cell inner membrane. In terms of biological role, could be involved in insertion of integral membrane proteins into the membrane. The sequence is that of Putative membrane protein insertion efficiency factor from Marinobacter nauticus (strain ATCC 700491 / DSM 11845 / VT8) (Marinobacter aquaeolei).